An 829-amino-acid chain; its full sequence is UBA domain-containing protein 8 (829 aa).

The EH 1 domain maps to 10-109 (EQQEFDRLLE…KQAKDDHHIK (100 aa)). Positions 43–78 (LPQKILAKIWDYCDQEDKGSLDRNQVYACFRLISQA) constitute an EF-hand 1 domain. The interval 93-121 (GDPPILPKQAKDDHHIKRSSSETADFTPF) is disordered. Phosphoserine is present on residues Ser112 and Ser113. EH domains follow at residues 129 to 225 (ERSE…AKSE) and 300 to 398 (DRSN…SDDT). Residues 333–368 (LDSEELARIWDTVDTQDRGYIDKDEFAVAMEIIKLR) form the EF-hand 2 domain. Polar residues-rich tracts occupy residues 466–506 (SFQD…TQSI) and 574–590 (TIPGSTSAALDDQQTTE). 3 disordered regions span residues 466-520 (SFQD…VNSS), 574-614 (TIPG…MRKL), and 724-785 (KPQV…QSYE). Residues 602 to 709 (EPTEEEQEEM…AKIDSIIADS (108 aa)) are a coiled coil. The segment covering 728–737 (TPAPPTPAPT) has biased composition (pro residues). The segment covering 764 to 774 (HANSSTPMNYV) has biased composition (polar residues). Low complexity predominate over residues 775–785 (SQPESPPQSYE). The 41-residue stretch at 788 to 828 (QNDNELLQELLSMGFPREKAVIALEATNYDVNEAANILLSS) folds into the UBA domain.

The polypeptide is UBA domain-containing protein 8 (ucp8) (Schizosaccharomyces pombe (strain 972 / ATCC 24843) (Fission yeast)).